The chain runs to 506 residues: 2-isopropylmalate synthase (506 aa).

A Pyruvate carboxyltransferase domain is found at 4 to 266; it reads ILFMDTTLRD…EPSITLKEIK (263 aa). Mn(2+)-binding residues include Asp-13, His-201, His-203, and Asn-237. The interval 390-506 is regulatory domain; sequence NITQLQVHFV…KLKSFIQLVK (117 aa).

This sequence belongs to the alpha-IPM synthase/homocitrate synthase family. LeuA type 1 subfamily. In terms of assembly, homodimer. The cofactor is Mn(2+).

Its subcellular location is the cytoplasm. It carries out the reaction 3-methyl-2-oxobutanoate + acetyl-CoA + H2O = (2S)-2-isopropylmalate + CoA + H(+). It functions in the pathway amino-acid biosynthesis; L-leucine biosynthesis; L-leucine from 3-methyl-2-oxobutanoate: step 1/4. Functionally, catalyzes the condensation of the acetyl group of acetyl-CoA with 3-methyl-2-oxobutanoate (2-ketoisovalerate) to form 3-carboxy-3-hydroxy-4-methylpentanoate (2-isopropylmalate). This is 2-isopropylmalate synthase from Bacillus thuringiensis subsp. konkukian (strain 97-27).